The sequence spans 64 residues: Beta-defensin 1 (64 aa).

An N-terminal signal peptide occupies residues 1–20 (MRLHHLLLVLFFLVLSAGSG). The propeptide occupies 21–26 (FTQGIR). Cystine bridges form between C31–C60, C38–C53, and C43–C61.

It belongs to the beta-defensin family. Monomer. Homodimer.

The protein resides in the secreted. It localises to the membrane. Functionally, has bactericidal activity. May act as a ligand for C-C chemokine receptor CCR6. Positively regulates the sperm motility and bactericidal activity in a CCR6-dependent manner. Binds to CCR6 and triggers Ca2+ mobilization in the sperm which is important for its motility. This is Beta-defensin 1 (DEFB1) from Capra hircus (Goat).